A 297-amino-acid chain; its full sequence is Glycine--tRNA ligase alpha subunit (297 aa).

This sequence belongs to the class-II aminoacyl-tRNA synthetase family. Tetramer of two alpha and two beta subunits.

It localises to the cytoplasm. It carries out the reaction tRNA(Gly) + glycine + ATP = glycyl-tRNA(Gly) + AMP + diphosphate. The polypeptide is Glycine--tRNA ligase alpha subunit (glyQ) (Halalkalibacterium halodurans (strain ATCC BAA-125 / DSM 18197 / FERM 7344 / JCM 9153 / C-125) (Bacillus halodurans)).